The following is a 750-amino-acid chain: Ribosomal RNA large subunit methyltransferase K/L (750 aa).

Residues 46–157 form the THUMP domain; it reads TAYRLCLWSR…RGEAILSLDL (112 aa).

Belongs to the methyltransferase superfamily. RlmKL family.

The protein localises to the cytoplasm. It carries out the reaction guanosine(2445) in 23S rRNA + S-adenosyl-L-methionine = N(2)-methylguanosine(2445) in 23S rRNA + S-adenosyl-L-homocysteine + H(+). The enzyme catalyses guanosine(2069) in 23S rRNA + S-adenosyl-L-methionine = N(2)-methylguanosine(2069) in 23S rRNA + S-adenosyl-L-homocysteine + H(+). Specifically methylates the guanine in position 2445 (m2G2445) and the guanine in position 2069 (m7G2069) of 23S rRNA. This is Ribosomal RNA large subunit methyltransferase K/L from Pseudomonas savastanoi pv. phaseolicola (strain 1448A / Race 6) (Pseudomonas syringae pv. phaseolicola (strain 1448A / Race 6)).